Consider the following 63-residue polypeptide: Metallothionein (63 aa).

Residues 1-30 are beta; sequence MDPQDCTCAAGDSCSCAGSCKCKNCRCRSC. Residues cysteine 6, cysteine 8, cysteine 14, cysteine 16, cysteine 20, cysteine 22, cysteine 25, cysteine 27, cysteine 30, cysteine 34, cysteine 35, cysteine 37, cysteine 38, cysteine 42, cysteine 45, cysteine 49, cysteine 51, cysteine 59, cysteine 61, and cysteine 62 each coordinate a divalent metal cation. An alpha region spans residues 31-63; the sequence is RKSCCSCCPAGCNNCAKGCVCKEPASSKCSCCH.

The protein belongs to the metallothionein superfamily. Type 1 family.

Functionally, metallothioneins have a high content of cysteine residues that bind various heavy metals. The sequence is that of Metallothionein from Anas platyrhynchos (Mallard).